A 909-amino-acid polypeptide reads, in one-letter code: DNA mismatch repair protein MutS (909 aa).

A compositionally biased stretch (basic and acidic residues) spans 275–290; it reads QKAERPPLSRPEREEQ. The interval 275–295 is disordered; the sequence is QKAERPPLSRPEREEQGSTLF. 661 to 668 provides a ligand contact to ATP; sequence GPNMGGKS.

This sequence belongs to the DNA mismatch repair MutS family.

In terms of biological role, this protein is involved in the repair of mismatches in DNA. It is possible that it carries out the mismatch recognition step. This protein has a weak ATPase activity. The sequence is that of DNA mismatch repair protein MutS from Mesorhizobium japonicum (strain LMG 29417 / CECT 9101 / MAFF 303099) (Mesorhizobium loti (strain MAFF 303099)).